The sequence spans 353 residues: uncharacterized protein (353 aa).

An N-terminal signal peptide occupies residues 1 to 18; the sequence is MKFVLFAQLAAVAAPAIA. The disordered stretch occupies residues 94 to 119; the sequence is EGGNVRRVPGGPSQSARQIGDSSTPM. The segment covering 105–119 has biased composition (polar residues); the sequence is PSQSARQIGDSSTPM. N-linked (GlcNAc...) asparagine glycosylation is found at Asn-165 and Asn-312.

It belongs to the glycosyl hydrolase 3 family.

The protein resides in the secreted. This is an uncharacterized protein from Arthroderma benhamiae (strain ATCC MYA-4681 / CBS 112371) (Trichophyton mentagrophytes).